Consider the following 540-residue polypeptide: Lysosomal cobalamin transport escort protein LMBD1 (540 aa).

Topologically, residues 1–10 are extracellular; that stretch reads MATSGAASAE. A helical membrane pass occupies residues 11–31; sequence LVIGWCIFGLLLLAILAFCWI. Residues 32–50 are Cytoplasmic-facing; that stretch reads YVRKYQSRRESEVVSTITA. The helical transmembrane segment at 51 to 71 threads the bilayer; sequence IFSLAIALITSALLPVDIFLV. Over 72-100 the chain is Extracellular; sequence SYMKNQNGTFKDWANANVSRQIEDTVLYG. 2 N-linked (GlcNAc...) asparagine glycosylation sites follow: Asn78 and Asn88. A helical membrane pass occupies residues 101–121; sequence YYTLYSVILFCVFFWIPFVYF. The Cytoplasmic portion of the chain corresponds to 122–144; the sequence is YYEEKDDDDTSKCTQIKTALKYT. A helical membrane pass occupies residues 145-165; sequence LGFVVICALLLLVGAFVPLNV. Residues 166–188 are Extracellular-facing; the sequence is PNNKNSTEWEKVKSLFEELGSSH. A glycan (N-linked (GlcNAc...) asparagine) is linked at Asn170. Residues 189–209 form a helical membrane-spanning segment; it reads GLAALSFSISSLTLIGMLAAI. The Cytoplasmic segment spans residues 210–305; it reads TYTAYGMSAL…KFCGALRPLK (96 aa). The YERL motif; mediates interaction with adapter protein complex 2 and is essential for its function in clathrin-mediated endocytosis of INSR signature appears at 232–235; sequence YERL. A Phosphothreonine modification is found at Thr238. Positions 294-297 match the WTKF motif; mediates interaction with adapter protein complex 2 and is essential for its function in clathrin-mediated endocytosis of INSR motif; it reads WTKF. The helical transmembrane segment at 306–326 threads the bilayer; the sequence is IVWGIFFILVALLFVISLFLS. The Extracellular segment spans residues 327 to 364; sequence NLDKALHSAGIDSGFIIFGANLSNPLNMLLPLLQTVFP. N-linked (GlcNAc...) asparagine glycosylation is present at Asn347. A helical membrane pass occupies residues 365-385; the sequence is LDYILITIIIMYFIFTSMAGI. Over 386–408 the chain is Cytoplasmic; it reads RNIGIWFFWIRLYKIRRGRTRPQ. A helical transmembrane segment spans residues 409-429; it reads ALLFLCMILLLIVLHTSYMIY. Topologically, residues 430 to 486 are extracellular; that stretch reads SLAPQYVMYGSQNYLIETNITSDNHKGNSTLSVPKRCDADAPEDQCTVTRTYLFLHK. Residues Asn448 and Asn457 are each glycosylated (N-linked (GlcNAc...) asparagine). The chain crosses the membrane as a helical span at residues 487-507; that stretch reads FWFFSAAYYFGNWAFLGVFLI. At 508–540 the chain is on the cytoplasmic side; sequence GLIVSCCKGKKSVIEGVDEDSDISDDEPSVYSA. A phosphoserine mark is found at Ser528 and Ser531.

Belongs to the LIMR family. LMBRD1 subfamily. As to quaternary structure, (Microbial infection) Interacts with hepatitis delta virus NES (HDAg-L). In terms of assembly, interacts with ABCD4; this interaction induces the translocation of ABCD4 from the endoplasmic reticulum to the lysosome. Interacts with ABCD4 and MMACHC; this interaction ensures the transport of cobalamin from the lysosome to the cytoplasm. Interacts with INSR, adapter protein complex 2 and clathrin heavy chain. In terms of processing, N-glycosylated. As to expression, isoform 3 is expressed in liver.

Its subcellular location is the endoplasmic reticulum membrane. The protein resides in the lysosome membrane. It localises to the cell membrane. The protein localises to the cytoplasmic vesicle. It is found in the clathrin-coated vesicle. Its function is as follows. Lysosomal membrane chaperone required to export cobalamin (vitamin B12) from the lysosome to the cytosol, allowing its conversion to cofactors. Targets ABCD4 transporter from the endoplasmic reticulum to the lysosome. Then forms a complex with lysosomal ABCD4 and cytoplasmic MMACHC to transport cobalamin across the lysosomal membrane. Acts as an adapter protein which plays an important role in mediating and regulating the internalization of the insulin receptor (INSR). Involved in clathrin-mediated endocytosis of INSR via its interaction with adapter protein complex 2. Essential for the initiation of gastrulation and early formation of mesoderm structures during embryogenesis. (Microbial infection) May play a role in the assembly of hepatitis delta virus (HDV). The chain is Lysosomal cobalamin transport escort protein LMBD1 from Homo sapiens (Human).